Here is an 88-residue protein sequence, read N- to C-terminus: UPF0250 protein Shewmr4_0986 (88 aa).

It belongs to the UPF0250 family.

This Shewanella sp. (strain MR-4) protein is UPF0250 protein Shewmr4_0986.